Consider the following 129-residue polypeptide: NADPH-dependent 7-cyano-7-deazaguanine reductase (129 aa).

Cys-34 acts as the Thioimide intermediate in catalysis. Asp-41 serves as the catalytic Proton donor. Residues 56-58 and 75-76 contribute to the substrate site; these read VEL and HE.

Belongs to the GTP cyclohydrolase I family. QueF type 1 subfamily.

The protein resides in the cytoplasm. The enzyme catalyses 7-aminomethyl-7-carbaguanine + 2 NADP(+) = 7-cyano-7-deazaguanine + 2 NADPH + 3 H(+). It participates in tRNA modification; tRNA-queuosine biosynthesis. Catalyzes the NADPH-dependent reduction of 7-cyano-7-deazaguanine (preQ0) to 7-aminomethyl-7-deazaguanine (preQ1). This is NADPH-dependent 7-cyano-7-deazaguanine reductase from Nitrosococcus oceani (strain ATCC 19707 / BCRC 17464 / JCM 30415 / NCIMB 11848 / C-107).